A 118-amino-acid chain; its full sequence is UPF0231 protein PM0457 (118 aa).

The protein belongs to the UPF0231 family.

The chain is UPF0231 protein PM0457 from Pasteurella multocida (strain Pm70).